The primary structure comprises 712 residues: MFEKPVVKTFQYGNHTVTLETGVMARQATAAVMATMDDTAVFVSVVGKKEAVVGQDFFPLTVNYQERTYAAGKIPGGFFKREGRPSEGETLIARLIDRPIRPLFPDGFTNEVQVIATVVSVNPDVQPDIISMIGTSAALAISGLPFNGPIGAARVGHIDGQLVLNPSEKELKQSRLDLVVAGTDNAVLMVESEAQILTEEEMLAAVVFGHDQQQAVIKAINEFAAEVATPAWEWVAPAENTELKAKVAALAETRLVEAYQITEKMARYDRIHAISSEVTAALLAENEALDTKEIHTIFHDLEKTVVRRSIIAGNPRIDGREKDMVRALDVRTGVLPRTHGSALFTRGETQALVTATLGTQRDAQIIDELTGEKKDHFLLHYNFPPYCVGETGFVGSPKRREIGHGRLAKRGIAAVMPSPEEFPYTVRVVSEITESNGSSSMASVCGSSLALMDAGVPIKASVAGIAMGLVKEENDFVVLSDILGDEDHLGDMDFKVAGTATGVTALQMDIKIEGITKEIMQIALNQAKGARLHILSVMDQAISAARSDISEFAPRIHTMKISVEKIKDVIGKGGAVIRQLTEETGTTIEIEDDGTIKIAATDGDQAKEAIRRIQEITAEVEVGVIYTGKVARLADFGAFVTILPGKDGLVHISQIADKRVEKVSDYLTEGQEVQVKVLEIDRQGRVRLSMKEAVETSDAAAEVAPQAAPQAE.

Mg(2+) is bound by residues Asp487 and Asp493. In terms of domain architecture, KH spans 554–613; it reads PRIHTMKISVEKIKDVIGKGGAVIRQLTEETGTTIEIEDDGTIKIAATDGDQAKEAIRRI. An S1 motif domain is found at 623–691; the sequence is GVIYTGKVAR…RQGRVRLSMK (69 aa).

This sequence belongs to the polyribonucleotide nucleotidyltransferase family. Component of the RNA degradosome, which is a multiprotein complex involved in RNA processing and mRNA degradation. The cofactor is Mg(2+).

The protein resides in the cytoplasm. The catalysed reaction is RNA(n+1) + phosphate = RNA(n) + a ribonucleoside 5'-diphosphate. In terms of biological role, involved in mRNA degradation. Catalyzes the phosphorolysis of single-stranded polyribonucleotides processively in the 3'- to 5'-direction. The protein is Polyribonucleotide nucleotidyltransferase of Vibrio cholerae serotype O1 (strain ATCC 39541 / Classical Ogawa 395 / O395).